The following is a 42-amino-acid chain: Cytochrome b559 subunit beta (42 aa).

A helical transmembrane segment spans residues 17 to 33 (WLTIHALAVPTVFFLGA). His-21 provides a ligand contact to heme.

This sequence belongs to the PsbE/PsbF family. In terms of assembly, heterodimer of an alpha subunit and a beta subunit. PSII is composed of 1 copy each of membrane proteins PsbA, PsbB, PsbC, PsbD, PsbE, PsbF, PsbH, PsbI, PsbJ, PsbK, PsbL, PsbM, PsbT, PsbX, PsbY, PsbZ, Psb30/Ycf12, at least 3 peripheral proteins of the oxygen-evolving complex and a large number of cofactors. It forms dimeric complexes. Heme b serves as cofactor.

Its subcellular location is the plastid. The protein resides in the chloroplast thylakoid membrane. This b-type cytochrome is tightly associated with the reaction center of photosystem II (PSII). PSII is a light-driven water:plastoquinone oxidoreductase that uses light energy to abstract electrons from H(2)O, generating O(2) and a proton gradient subsequently used for ATP formation. It consists of a core antenna complex that captures photons, and an electron transfer chain that converts photonic excitation into a charge separation. In Emiliania huxleyi (Coccolithophore), this protein is Cytochrome b559 subunit beta.